A 386-amino-acid chain; its full sequence is ATP phosphoribosyltransferase regulatory subunit (386 aa).

It belongs to the class-II aminoacyl-tRNA synthetase family. HisZ subfamily. As to quaternary structure, heteromultimer composed of HisG and HisZ subunits.

The protein resides in the cytoplasm. Its pathway is amino-acid biosynthesis; L-histidine biosynthesis; L-histidine from 5-phospho-alpha-D-ribose 1-diphosphate: step 1/9. Functionally, required for the first step of histidine biosynthesis. May allow the feedback regulation of ATP phosphoribosyltransferase activity by histidine. This is ATP phosphoribosyltransferase regulatory subunit from Rhodospirillum centenum (strain ATCC 51521 / SW).